Consider the following 265-residue polypeptide: Mlc titration factor A (265 aa).

The Zn(2+) site is built by His111, His148, His152, and Glu211.

The protein belongs to the MtfA family. As to quaternary structure, interacts with Mlc. Zn(2+) is required as a cofactor.

It localises to the cytoplasm. Its function is as follows. Involved in the modulation of the activity of the glucose-phosphotransferase system (glucose-PTS). Interacts with the transcriptional repressor Mlc, preventing its interaction with DNA and leading to the modulation of expression of genes regulated by Mlc, including ptsG, which encodes the PTS system glucose-specific EIICB component. In terms of biological role, shows zinc-dependent metallopeptidase activity. In Salmonella gallinarum (strain 287/91 / NCTC 13346), this protein is Mlc titration factor A.